An 84-amino-acid polypeptide reads, in one-letter code: Mitochondrial import inner membrane translocase subunit Tim9 (84 aa).

The short motif at 28–52 is the Twin CX3C motif element; the sequence is CFMDCVKDFTTREVKPEETTCSESC. 2 disulfide bridges follow: Cys28–Cys52 and Cys32–Cys48.

The protein belongs to the small Tim family. Heterohexamer; composed of 3 copies of TIMM9 and 3 copies of TIMM10/TIM10A, named soluble 70 kDa complex. The complex forms a 6-bladed alpha-propeller structure and associates with the TIMM22 component of the TIM22 complex. Interacts with multi-pass transmembrane proteins in transit.

The protein localises to the mitochondrion inner membrane. In terms of biological role, mitochondrial intermembrane chaperone that participates in the import and insertion of multi-pass transmembrane proteins into the mitochondrial inner membrane. May also be required for the transfer of beta-barrel precursors from the TOM complex to the sorting and assembly machinery (SAM complex) of the outer membrane. Acts as a chaperone-like protein that protects the hydrophobic precursors from aggregation and guide them through the mitochondrial intermembrane space. In Danio rerio (Zebrafish), this protein is Mitochondrial import inner membrane translocase subunit Tim9 (timm9).